A 462-amino-acid polypeptide reads, in one-letter code: Cysteine--tRNA ligase (462 aa).

C30 is a Zn(2+) binding site. The short motif at 32 to 42 (PTVYDRAHLGN) is the 'HIGH' region element. 3 residues coordinate Zn(2+): C221, H246, and E250. Residues 279–283 (KMSKS) carry the 'KMSKS' region motif. K282 is an ATP binding site.

It belongs to the class-I aminoacyl-tRNA synthetase family. Monomer. It depends on Zn(2+) as a cofactor.

It localises to the cytoplasm. It catalyses the reaction tRNA(Cys) + L-cysteine + ATP = L-cysteinyl-tRNA(Cys) + AMP + diphosphate. The chain is Cysteine--tRNA ligase from Paracoccus denitrificans (strain Pd 1222).